We begin with the raw amino-acid sequence, 476 residues long: Proton-coupled amino acid transporter 1 (476 aa).

The span at 1 to 15 shows a compositional bias: basic and acidic residues; that stretch reads MSTQRLRNEDYHDYS. The interval 1–32 is disordered; that stretch reads MSTQRLRNEDYHDYSSTDVSPEESPSEGLNNL. Over 1 to 51 the chain is Cytoplasmic; sequence MSTQRLRNEDYHDYSSTDVSPEESPSEGLNNLSSPGSYQRFGQSNSTTWFQ. A helical transmembrane segment spans residues 52–72; that stretch reads TLIHLLKGNIGTGLLGLPLAV. Residues 73-78 are Extracellular-facing; the sequence is KNAGIV. A helical membrane pass occupies residues 79–99; the sequence is MGPISLLIIGIVAVHCMGILV. Residues 100 to 141 lie on the Cytoplasmic side of the membrane; sequence KCAHHFCRRLNKSFVDYGDTVMYGLESSPCSWLRNHAHWGRR. A helical membrane pass occupies residues 142-162; the sequence is VVDFFLIVTQLGFCCVYFVFL. At 163–190 the chain is on the extracellular side; it reads ADNFKQVIEAANGTTNNCHNNETVILTP. N-linked (GlcNAc...) asparagine glycosylation is found at N174 and N183. The cysteines at positions 180 and 329 are disulfide-linked. The chain crosses the membrane as a helical span at residues 191 to 211; sequence TMDSRLYMLSFLPFLVLLVFI. The Cytoplasmic segment spans residues 212–215; sequence RNLR. Residues 216-236 traverse the membrane as a helical segment; sequence ALSIFSLLANITMLVSLVMIY. The Extracellular segment spans residues 237–257; it reads QFIVQRIPDPSHLPLVAPWKT. The helical transmembrane segment at 258–278 threads the bilayer; sequence YPLFFGTAIFSFEGIGMVLPL. Residues 279 to 289 are Cytoplasmic-facing; sequence ENKMKDPRKFP. The helical transmembrane segment at 290-310 threads the bilayer; sequence LILYLGMVIVTILYISLGCLG. Residues 311–342 are Extracellular-facing; the sequence is YLQFGANIQGSITLNLPNCWLYQSVKLLYSIG. A helical transmembrane segment spans residues 343 to 363; that stretch reads IFFTYALQFYVPAEIIIPFFV. Over 364 to 372 the chain is Cytoplasmic; that stretch reads SRAPEHCEL. A helical membrane pass occupies residues 373–393; it reads VVDLFVRTVLVCLTCILAILI. Over 394 to 397 the chain is Extracellular; the sequence is PRLD. Residues 398–418 traverse the membrane as a helical segment; sequence LVISLVGSVSSSALALIIPPL. At 419–439 the chain is on the cytoplasmic side; that stretch reads LEVTTFYSEGMSPLTIFKDAL. A helical transmembrane segment spans residues 440 to 460; the sequence is ISILGFVGFVVGTYEALYELI. Over 461–476 the chain is Extracellular; it reads QPSNAPIFINSTCAFI. N-linked (GlcNAc...) asparagine glycosylation is present at N470.

This sequence belongs to the amino acid/polyamine transporter 2 family.

Its subcellular location is the cell membrane. The protein resides in the apical cell membrane. The protein localises to the lysosome membrane. The catalysed reaction is glycine(in) + H(+)(in) = glycine(out) + H(+)(out). It catalyses the reaction L-alanine(in) + H(+)(in) = L-alanine(out) + H(+)(out). The enzyme catalyses D-alanine(in) + H(+)(in) = D-alanine(out) + H(+)(out). It carries out the reaction L-proline(out) + H(+)(out) = L-proline(in) + H(+)(in). The catalysed reaction is D-proline(out) + H(+)(out) = D-proline(in) + H(+)(in). It catalyses the reaction D-serine(out) + H(+)(out) = D-serine(in) + H(+)(in). The enzyme catalyses L-serine(in) + H(+)(in) = L-serine(out) + H(+)(out). It carries out the reaction 4-aminobutanoate(in) + H(+)(in) = 4-aminobutanoate(out) + H(+)(out). The catalysed reaction is beta-alanine(in) + H(+)(in) = beta-alanine(out) + H(+)(out). Its function is as follows. Electrogenic proton/amino acid symporter with selectivity for small apolar L-amino acids, their D-enantiomers and selected amino acid derivatives such as 4-aminobutanoate/GABA. May be involved in the efflux from the lysosomal compartment of neutral amino acids resulting from proteolysis. May play a role in specifying sites for exocytosis in neurons. The chain is Proton-coupled amino acid transporter 1 from Homo sapiens (Human).